The sequence spans 606 residues: Aspartate--tRNA(Asp/Asn) ligase (606 aa).

E196 provides a ligand contact to L-aspartate. The segment at 220 to 223 is aspartate; that stretch reads QIFK. Residue R242 participates in L-aspartate binding. ATP is bound by residues 242–244 and Q251; that span reads RDE. An L-aspartate-binding site is contributed by H465. ATP is bound at residue E499. Position 506 (R506) interacts with L-aspartate. 551–554 serves as a coordination point for ATP; sequence GMDR.

Belongs to the class-II aminoacyl-tRNA synthetase family. Type 1 subfamily. In terms of assembly, homodimer.

Its subcellular location is the cytoplasm. The catalysed reaction is tRNA(Asx) + L-aspartate + ATP = L-aspartyl-tRNA(Asx) + AMP + diphosphate. Aspartyl-tRNA synthetase with relaxed tRNA specificity since it is able to aspartylate not only its cognate tRNA(Asp) but also tRNA(Asn). Reaction proceeds in two steps: L-aspartate is first activated by ATP to form Asp-AMP and then transferred to the acceptor end of tRNA(Asp/Asn). This chain is Aspartate--tRNA(Asp/Asn) ligase, found in Oleidesulfovibrio alaskensis (strain ATCC BAA-1058 / DSM 17464 / G20) (Desulfovibrio alaskensis).